Consider the following 396-residue polypeptide: Tryptophan synthase beta chain (396 aa).

K86 is modified (N6-(pyridoxal phosphate)lysine).

This sequence belongs to the TrpB family. As to quaternary structure, tetramer of two alpha and two beta chains. The cofactor is pyridoxal 5'-phosphate.

It carries out the reaction (1S,2R)-1-C-(indol-3-yl)glycerol 3-phosphate + L-serine = D-glyceraldehyde 3-phosphate + L-tryptophan + H2O. Its pathway is amino-acid biosynthesis; L-tryptophan biosynthesis; L-tryptophan from chorismate: step 5/5. The beta subunit is responsible for the synthesis of L-tryptophan from indole and L-serine. This is Tryptophan synthase beta chain from Aliivibrio salmonicida (strain LFI1238) (Vibrio salmonicida (strain LFI1238)).